Reading from the N-terminus, the 356-residue chain is MTKIAFTGGGTVGHVSVNLSLIPTALSQGYEVLYIGSKNGIEREMIESQLPEIKYYPISSGKLRRYISLENAKDVFKVLKGILDARKVLKKEKPDLLFSKGGFVSVPVVIAAKSLNIPTIIHESDLTPGLANKIALKFAKKIYTTFEETLNYLPKEKADFIGATIREDLKNGNAHNGYQLTGFNENKKVLLVMGGSLGSKKLNSIIRENLDALLQQYQVIHLTGKGLKDAQVKKSGYIQYEFVKEDLTDLLAITDTVISRAGSNAIYEFLTLRIPMLLVPLGLDQSRGDQIDNANHFADKGYAKTIDEEQLTAQILLQELNKMEQERTRIINNMKSYEQSYTKEALFDKMIKDALN.

3 residues coordinate UDP-N-acetyl-alpha-D-glucosamine: Arg-166, Ser-196, and Gln-290.

This sequence belongs to the glycosyltransferase 28 family. MurG subfamily.

It is found in the cell membrane. It carries out the reaction Mur2Ac(oyl-L-Ala-gamma-D-Glu-L-Lys-D-Ala-D-Ala)-di-trans,octa-cis-undecaprenyl diphosphate + UDP-N-acetyl-alpha-D-glucosamine = beta-D-GlcNAc-(1-&gt;4)-Mur2Ac(oyl-L-Ala-gamma-D-Glu-L-Lys-D-Ala-D-Ala)-di-trans,octa-cis-undecaprenyl diphosphate + UDP + H(+). It functions in the pathway cell wall biogenesis; peptidoglycan biosynthesis. Functionally, cell wall formation. Catalyzes the transfer of a GlcNAc subunit on undecaprenyl-pyrophosphoryl-MurNAc-pentapeptide (lipid intermediate I) to form undecaprenyl-pyrophosphoryl-MurNAc-(pentapeptide)GlcNAc (lipid intermediate II). The protein is UDP-N-acetylglucosamine--N-acetylmuramyl-(pentapeptide) pyrophosphoryl-undecaprenol N-acetylglucosamine transferase of Staphylococcus aureus (strain MRSA252).